A 1216-amino-acid chain; its full sequence is Histone-lysine N-methyltransferase SETDB1-B (1216 aa).

The stretch at 38 to 61 forms a coiled coil; it reads KADLEQLQEWVEQREKEVADIDAL. 2 Tudor domains span residues 266–329 and 356–412; these read RLFV…LKKT and LLKP…NLKM. The disordered stretch occupies residues 417-513; the sequence is SQEKKMAGQQ…QGMPSDLQPK (97 aa). Residues 467 to 478 show a composition bias toward pro residues; the sequence is PVAPQPAGPPQP. Over residues 482–498 the composition is skewed to polar residues; sequence ESPSFKSQMAKKSTGQL. The 72-residue stretch at 595–666 folds into the MBD domain; sequence HRGRNPLLTP…EMFCLDPYVL (72 aa). Residues 728 to 801 enclose the Pre-SET domain; it reads VGCDCTDGCR…MCTNRLVQHG (74 aa). Zn(2+)-binding residues include Cys-730, Cys-732, Cys-736, Cys-742, Cys-744, Cys-782, Cys-786, Cys-788, and Cys-793. The SET domain occupies 804 to 1179; it reads VRLQLFKTQN…AGTELTWDYN (376 aa). S-adenosyl-L-methionine-binding positions include 814–816, Asp-852, and Tyr-854; that span reads KGW. Disordered regions lie at residues 892–944, 961–1057, and 1081–1108; these read LPAS…DTFV, RRQA…KTQA, and KSGGGGAGGGGSGPSHGHGGGGGDNGPK. Residues 918 to 940 are compositionally biased toward acidic residues; that stretch reads DSSEESDDEKDDDSNEDDSDSSD. 2 stretches are compositionally biased toward basic and acidic residues: residues 966-976 and 983-997; these read GLKEESQDSKD and GEDRKPPHMPEETGK. Residues 1003-1016 are compositionally biased toward polar residues; it reads WLTNQSSTSANQSV. Basic and acidic residues-rich tracts occupy residues 1020-1029 and 1046-1055; these read GGIKTEKKDV and DDNKEREKKT. The segment covering 1082 to 1105 has biased composition (gly residues); it reads SGGGGAGGGGSGPSHGHGGGGGDN. S-adenosyl-L-methionine-binding positions include Arg-1133 and 1136–1137; that span reads NH. Zn(2+)-binding residues include Cys-1139, Cys-1192, Cys-1194, and Cys-1199. Residues 1188–1204 enclose the Post-SET domain; it reads KELLCCCGSTECRGRLL.

Belongs to the class V-like SAM-binding methyltransferase superfamily. Histone-lysine methyltransferase family. Suvar3-9 subfamily.

It localises to the nucleus. Its subcellular location is the chromosome. The enzyme catalyses L-lysyl(4)-[histone H3] + 3 S-adenosyl-L-methionine = N(6),N(6),N(6)-trimethyl-L-lysyl(4)-[histone H3] + 3 S-adenosyl-L-homocysteine + 3 H(+). Functionally, histone methyltransferase that specifically trimethylates 'Lys-9' of histone H3. H3 'Lys-9' trimethylation represents a specific tag for epigenetic transcriptional repression by recruiting HP1 (CBX1, CBX3 and/or CBX5) proteins to methylated histones. Mainly functions in euchromatin regions, thereby playing a central role in the silencing of euchromatic genes. H3 'Lys-9' trimethylation is coordinated with DNA methylation. Plays a role in promoter hypermethylation and transcriptional silencing of tumor suppressor genes (TSGs) or other tumor-related genes. Also required to maintain a transcriptionally repressive state of genes in undifferentiated embryonic stem cells (ESCs). Associates at promoter regions of tumor suppressor genes (TSGs) leading to their gene silencing. The sequence is that of Histone-lysine N-methyltransferase SETDB1-B (setdb1b) from Danio rerio (Zebrafish).